The chain runs to 640 residues: Threonine--tRNA ligase (640 aa).

Positions 1 to 61 (MPTITLPDGS…ERDASLQIIT (61 aa)) constitute a TGS domain. The tract at residues 242 to 533 (DHRRIGKQLD…LIEHYAGAFP (292 aa)) is catalytic. Positions 333, 384, and 510 each coordinate Zn(2+).

This sequence belongs to the class-II aminoacyl-tRNA synthetase family. As to quaternary structure, homodimer. The cofactor is Zn(2+).

The protein localises to the cytoplasm. It catalyses the reaction tRNA(Thr) + L-threonine + ATP = L-threonyl-tRNA(Thr) + AMP + diphosphate + H(+). Its function is as follows. Catalyzes the attachment of threonine to tRNA(Thr) in a two-step reaction: L-threonine is first activated by ATP to form Thr-AMP and then transferred to the acceptor end of tRNA(Thr). Also edits incorrectly charged L-seryl-tRNA(Thr). The sequence is that of Threonine--tRNA ligase from Stutzerimonas stutzeri (strain A1501) (Pseudomonas stutzeri).